Reading from the N-terminus, the 92-residue chain is Late cornified envelope protein 3E (92 aa).

Over residues 1 to 10 (MSCQQNQKQC) the composition is skewed to low complexity. 2 disordered regions span residues 1 to 22 (MSCQ…PKCP) and 64 to 92 (RRQR…GGCC). Residues 11 to 22 (QPPPKCPSPKCP) show a composition bias toward pro residues. Residues 76 to 92 (GQQGGGSGCCHGSGGCC) are compositionally biased toward gly residues.

Belongs to the LCE family. As to quaternary structure, interacts with CYSRT1. In terms of tissue distribution, skin-specific. Expression was readily detected in adult trunk skin, adult arm skin, fetal skin, penal skin, vulva, esophagus and tongue. Not expressed in the cervix, rectum, lung, colon, or placenta.

Its function is as follows. Precursors of the cornified envelope of the stratum corneum. This Homo sapiens (Human) protein is Late cornified envelope protein 3E (LCE3E).